The following is a 112-amino-acid chain: Nucleoid-associated protein FTW_0607 (112 aa).

The segment at methionine 1 to glutamate 27 is disordered. Basic and acidic residues predominate over residues glutamate 17–glutamate 27.

It belongs to the YbaB/EbfC family. Homodimer.

The protein localises to the cytoplasm. The protein resides in the nucleoid. Functionally, binds to DNA and alters its conformation. May be involved in regulation of gene expression, nucleoid organization and DNA protection. In Francisella tularensis subsp. tularensis (strain WY96-3418), this protein is Nucleoid-associated protein FTW_0607.